The chain runs to 554 residues: MRREGTMRLHRTFLLRVYLKESAVITYPASKKIYCQGKIFPTIRVGMREIQLTNGDSLTLYDTSGPYSDPNISIKSPQGLPRLREPWIKVRPRKTQLAFAKEGVITPEMEYAAIRENQKRELKKNTDQERERRLQGNSLSARIPNPITPEFIRNEIACGRAILPANINHPESEPMIIGRHFLVKVNANIGNSSLTSSVEEEVEKLIWALRWGADTVMDLSTGKKIKEIRETILRHSPVPIGTVPLYEALEKVDGDVKALTWEIFRDTLISQAEQGVDYFTIHAGVLNRFIPLTQKRVTGIVSRGGSLMAKWCLLHREENFLYTHFTEICEIMRAYDVSFSLGDGLRPGSIADANDEAQFAELKIQGELNRIAWKYGVQVMNEGPGHIPLNLIEENMTKQLAYCREAPFYTLGPLTTDIAPGYDHIGSAIGAAFIAWQGCALLCYVTPKEHLGLPNKQDVKEGLIAYKIAAHAADLAKGHPAARQRDDLLSQARFEFRWHDQFNLALDAETARLFHDETLPKESAKHAHFCSLCGPKFCAYKTSHEVRDTLQKVT.

Substrate is bound by residues Asn-188, Met-217, Tyr-246, His-282, 302 to 304, 343 to 346, and Glu-382; these read SRG and DGLR. His-386 provides a ligand contact to Zn(2+). Tyr-409 is a substrate binding site. A Zn(2+)-binding site is contributed by His-450. 3 residues coordinate [4Fe-4S] cluster: Cys-530, Cys-533, and Cys-538.

Belongs to the ThiC family. As to quaternary structure, homodimer. Requires [4Fe-4S] cluster as cofactor.

It catalyses the reaction 5-amino-1-(5-phospho-beta-D-ribosyl)imidazole + S-adenosyl-L-methionine = 4-amino-2-methyl-5-(phosphooxymethyl)pyrimidine + CO + 5'-deoxyadenosine + formate + L-methionine + 3 H(+). The protein operates within cofactor biosynthesis; thiamine diphosphate biosynthesis. Catalyzes the synthesis of the hydroxymethylpyrimidine phosphate (HMP-P) moiety of thiamine from aminoimidazole ribotide (AIR) in a radical S-adenosyl-L-methionine (SAM)-dependent reaction. The chain is Phosphomethylpyrimidine synthase from Coxiella burnetii (strain Dugway 5J108-111).